The following is a 770-amino-acid chain: Amyloid-beta precursor protein (770 aa).

Residues M1–A17 form the signal peptide. Over L18–A701 the chain is Extracellular. The tract at residues L28–V123 is GFLD subdomain. An E1 domain is found at L28–L189. Intrachain disulfides connect C38/C62, C73/C117, C98/C105, C133/C187, C144/C174, and C158/C186. Residue N96–H110 coordinates heparin. A cuBD subdomain region spans residues D131–L189. Residues F135–K155 form a copper-binding region. Residues H147, H151, and Y168 each contribute to the Cu(2+) site. The zinc-binding stretch occupies residues G181–P188. Zn(2+) is bound by residues E183, C186, and C187. The segment covering I196–D207 has biased composition (acidic residues). A disordered region spans residues I196–E284. At S198 the chain carries Phosphoserine; by CK2. S206 bears the Phosphoserine; by CK1 mark. Y217 and Y262 each carry sulfotyrosine. Residues V228–E264 show a composition bias toward acidic residues. Positions R268 to E281 are enriched in low complexity. Intrachain disulfides connect C291/C341, C300/C324, and C316/C337. The region spanning C291–C341 is the BPTI/Kunitz inhibitor domain. Y336 carries the sulfotyrosine modification. Residues V344–P365 carry the OX-2 motif. Residues A374–L565 form the E2 domain. Positions F391–L423 are heparin-binding. Position 441 is a phosphoserine (S441). The segment at F491–K522 is heparin-binding. Y497 carries the phosphotyrosine modification. The collagen-binding stretch occupies residues A523–R540. Residues N542 and N571 are each glycosylated (N-linked (GlcNAc...) asparagine). H677, Y681, H684, and H685 together coordinate Cu(2+). The Zn(2+) site is built by H677, Y681, H684, and H685. Positions V695–M722 are interaction with PSEN1. The chain crosses the membrane as a helical span at residues I702 to M722. Residues L723–N770 lie on the Cytoplasmic side of the membrane. The short motif at K724–G734 is the Basolateral sorting signal element. Phosphothreonine is present on T729. S730 is modified (phosphoserine; by APP-kinase I). An interaction with G(o)-alpha region spans residues H732–K751. T743 carries the post-translational modification Phosphothreonine; by CDK5 and MAPK10. The tract at residues G756–N770 is required for the interaction with KIF5B and for anterograde transport in axons. Y757 bears the Phosphotyrosine; by ABL1 mark. A YENPXY motif; contains endocytosis signal motif is present at residues Y757–Y762. A Glycyl lysine isopeptide (Lys-Gly) (interchain with G-Cter in ubiquitin) cross-link involves residue K763.

The protein belongs to the APP family. In terms of assembly, binds, via its C-terminus, to the PID domain of several cytoplasmic proteins, including APBB family members, the APBA family, MAPK8IP1, SHC1 and NUMB and DAB1. Binding to DAB1 inhibits its serine phosphorylation. Interacts (via NPXY motif) with DAB2 (via PID domain); the interaction is impaired by tyrosine phosphorylation of the NPXY motif. Also interacts with GPCR-like protein BPP, APPBP1, IB1, KNS2 (via its TPR domains), APPBP2 (via BaSS) and DDB1. In vitro, it binds MAPT via the MT-binding domains. Associates with microtubules in the presence of ATP and in a kinesin-dependent manner. Interacts, through a C-terminal domain, with GNAO1. Amyloid-beta protein 42 binds CHRNA7 in hippocampal neurons. Amyloid-beta associates with HADH2. Interacts with CPEB1, ANKS1B and AGER. Interacts with ITM2B. Interacts with ITM2C. Interacts with IDE. Can form homodimers; dimerization is enhanced in the presence of Cu(2+) ions. Can form homodimers; this is promoted by heparin binding. Amyloid-beta protein 40 interacts with S100A9. CTF-alpha product of APP interacts with GSAP. Interacts with SORL1 (via N-terminal ectodomain); this interaction retains APP in the trans-Golgi network and reduces processing into soluble APP-alpha and amyloid-beta peptides. The C99 fragment also interacts with SORL1. Interacts with PLD3. Interacts with VDAC1. Interacts with NSG1; could regulate APP processing. Amyloid-beta protein 42 interacts with FPR2. Interacts (via transmembrane region) with PSEN1; the interaction is direct. Interacts with LRRK2. Interacts (via cytoplasmic domain) with KIF5B. Interacts (via C-terminus) with APBB2/FE65L1 (via C-terminus). Interacts (via intracellular domain) with APBB3. Post-translationally, proteolytically processed under normal cellular conditions. Cleavage either by alpha-secretase, beta-secretase or theta-secretase leads to generation and extracellular release of soluble APP peptides, S-APP-alpha and S-APP-beta, and the retention of corresponding membrane-anchored C-terminal fragments, C80, C83 and C99. Subsequent processing of C80 and C83 by gamma-secretase yields P3 peptides. This is the major secretory pathway and is non-amyloidogenic. Alternatively, presenilin/nicastrin-mediated gamma-secretase processing of C99 releases the amyloid-beta proteins, amyloid-beta protein 40 and amyloid-beta protein 42, major components of amyloid plaques, and the cytotoxic C-terminal fragments, gamma-CTF(50), gamma-CTF(57) and gamma-CTF(59). PSEN1 cleavage is more efficient with C83 than with C99 as substrate (in vitro). Amyloid-beta protein 40 and Amyloid-beta protein 42 are cleaved by ACE. Many other minor amyloid-beta peptides, amyloid-beta 1-X peptides, are found in cerebral spinal fluid (CSF) including the amyloid-beta X-15 peptides, produced from the cleavage by alpha-secretase. Proteolytically cleaved by caspases during neuronal apoptosis. Cleavage at Asp-739 by either caspase-3, -8 or -9 results in the production of the neurotoxic C31 peptide and the increased production of amyloid-beta peptides. In terms of processing, N- and O-glycosylated. Post-translationally, phosphorylation in the C-terminal on tyrosine, threonine and serine residues is neuron-specific. Phosphorylation can affect APP processing, neuronal differentiation and interaction with other proteins. Phosphorylated on Thr-743 in neuronal cells by Cdc5 kinase and Mapk10, in dividing cells by Cdc2 kinase in a cell-cycle dependent manner with maximal levels at the G2/M phase and, in vitro, by GSK-3-beta. The Thr-743 phosphorylated form causes a conformational change which reduces binding of Fe65 family members. In dopaminergic (DA) neurons, phosphorylation on Thr-743 by LRKK2 promotes the production and the nuclear translocation of the APP intracellular domain (AICD) which induces DA neuron apoptosis. Phosphorylation on Tyr-757 is required for SHC binding. Phosphorylated in the extracellular domain by casein kinases on both soluble and membrane-bound APP. This phosphorylation is inhibited by heparin. Extracellular binding and reduction of copper, results in a corresponding oxidation of Cys-144 and Cys-158, and the formation of a disulfide bond. In terms of processing, trophic-factor deprivation triggers the cleavage of surface APP by beta-secretase to release sAPP-beta which is further cleaved to release an N-terminal fragment of APP (N-APP). Post-translationally, amyloid-beta peptides are degraded by IDE. Sulfated on tyrosine residues.

It is found in the cell membrane. The protein resides in the membrane. Its subcellular location is the perikaryon. The protein localises to the cell projection. It localises to the growth cone. It is found in the clathrin-coated pit. The protein resides in the early endosome. Its subcellular location is the cytoplasmic vesicle. The protein localises to the endoplasmic reticulum. It localises to the golgi apparatus. It is found in the secreted. The protein resides in the cell surface. Its subcellular location is the nucleus. The protein localises to the cytoplasm. Functionally, functions as a cell surface receptor and performs physiological functions on the surface of neurons relevant to neurite growth, neuronal adhesion and axonogenesis. Interaction between APP molecules on neighboring cells promotes synaptogenesis. Involved in cell mobility and transcription regulation through protein-protein interactions. Can promote transcription activation through binding to APBB1-KAT5 and inhibit Notch signaling through interaction with Numb. Couples to apoptosis-inducing pathways such as those mediated by G(o) and JIP. Inhibits G(o)-alpha ATPase activity. Acts as a kinesin I membrane receptor, mediating the axonal transport of beta-secretase and presenilin 1. By acting as a kinesin I membrane receptor, plays a role in axonal anterograde transport of cargo towards synapses in axons. May be involved in copper homeostasis/oxidative stress through copper ion reduction. In vitro, copper-metallated APP induces neuronal death directly or is potentiated through Cu(2+)-mediated low-density lipoprotein oxidation. Can regulate neurite outgrowth through binding to components of the extracellular matrix such as heparin and collagen I and IV. Induces a AGER-dependent pathway that involves activation of p38 MAPK, resulting in internalization of amyloid-beta peptide and mitochondrial dysfunction in cultured cortical neurons. Provides Cu(2+) ions for GPC1 which are required for release of nitric oxide (NO) and subsequent degradation of the heparan sulfate chains on GPC1. In terms of biological role, amyloid-beta peptides are lipophilic metal chelators with metal-reducing activity. Binds transient metals such as copper, zinc and iron. Its function is as follows. The gamma-CTF peptides as well as the caspase-cleaved peptides, including C31, are potent enhancers of neuronal apoptosis. The sequence is that of Amyloid-beta precursor protein from Sus scrofa (Pig).